The following is a 314-amino-acid chain: Hydroxyethylthiazole kinase (314 aa).

Position 70 (Met-70) interacts with substrate. Residues Arg-145 and Ser-217 each contribute to the ATP site. Gly-244 lines the substrate pocket.

The protein belongs to the Thz kinase family. Mg(2+) serves as cofactor.

It carries out the reaction 5-(2-hydroxyethyl)-4-methylthiazole + ATP = 4-methyl-5-(2-phosphooxyethyl)-thiazole + ADP + H(+). It participates in cofactor biosynthesis; thiamine diphosphate biosynthesis; 4-methyl-5-(2-phosphoethyl)-thiazole from 5-(2-hydroxyethyl)-4-methylthiazole: step 1/1. Catalyzes the phosphorylation of the hydroxyl group of 4-methyl-5-beta-hydroxyethylthiazole (THZ). This Bifidobacterium longum (strain DJO10A) protein is Hydroxyethylthiazole kinase.